An 863-amino-acid chain; its full sequence is Oleate activated transcription factor 3 (863 aa).

The zn(2)-C6 fungal-type DNA-binding region spans 19 to 47 (CTNCKKRKSKCDRTKPCGTCVRLGDVDSC). Residues 52–63 (DSSGQPESSPSL) are compositionally biased toward polar residues. The interval 52–99 (DSSGQPESSPSLNDADPLRKQSTPAERISPGFIKKRRSSQTRQDEDHW) is disordered.

Belongs to the OAF3 family.

The protein resides in the cytoplasm. It localises to the nucleus. The protein localises to the mitochondrion. Transcriptional inhibitor with a significantly increased number of target genes in response to oleate. This Saccharomyces cerevisiae (strain YJM789) (Baker's yeast) protein is Oleate activated transcription factor 3 (OAF3).